A 150-amino-acid chain; its full sequence is Large ribosomal subunit protein uL23m (150 aa).

It belongs to the universal ribosomal protein uL23 family. Component of the mitochondrial ribosome large subunit (39S) which comprises a 16S rRNA and about 50 distinct proteins.

The protein resides in the mitochondrion. The sequence is that of Large ribosomal subunit protein uL23m (mRpL23) from Drosophila melanogaster (Fruit fly).